The sequence spans 421 residues: D-amino acid dehydrogenase (421 aa).

Position 3 to 17 (3 to 17) interacts with FAD; the sequence is VLVLGGGVVGVASAY.

Belongs to the DadA oxidoreductase family. FAD serves as cofactor.

It carries out the reaction a D-alpha-amino acid + A + H2O = a 2-oxocarboxylate + AH2 + NH4(+). It participates in amino-acid degradation; D-alanine degradation; NH(3) and pyruvate from D-alanine: step 1/1. Functionally, oxidative deamination of D-amino acids. The sequence is that of D-amino acid dehydrogenase from Methylobacterium nodulans (strain LMG 21967 / CNCM I-2342 / ORS 2060).